Here is a 260-residue protein sequence, read N- to C-terminus: Coiled-coil domain-containing protein 127 (260 aa).

The stretch at 76–139 (AVISEHRRAV…EKSRLQPLRN (64 aa)) forms a coiled coil.

The sequence is that of Coiled-coil domain-containing protein 127 (Ccdc127) from Mus musculus (Mouse).